A 419-amino-acid chain; its full sequence is MDKFRVQGPTKLQGEVTISGAKNAALPILFAALLAEEPVEIQNVPKLKDVDTSMKLLSQLGAKVERNGSVHIDARDVNVFCAPYDLVKTMRASIWALGPLVARFGQGQVSLPGGCTIGARPVDLHISGLEQLGATIKLEEGYVKASVDGRLKGAHIVMDKVSVGATVTIMCAATLAEGTTIIENAAREPEIVDTANFLITLGAKISGQGTDRIVIEGVERLGGGVYRVLPDRIETGTFLVAAAISRGKIICRNTQPDTLDAVLAKLRDAGADIEVGEDWISLDMHGKRPKAVNVRTAPHPAFPTDMQAQFTLLNLVAEGTGFITETVFENRFMHVPELSRMGAHAEIESNTVICHGVEKLSGAQVMATDLRASASLVLAGCIAEGTTVVDRIYHIDRGYERIEDKLRALGANIERVKGE.

22–23 (KN) is a phosphoenolpyruvate binding site. Position 91 (arginine 91) interacts with UDP-N-acetyl-alpha-D-glucosamine. The active-site Proton donor is cysteine 115. Position 115 is a 2-(S-cysteinyl)pyruvic acid O-phosphothioketal (cysteine 115). Residues 120-124 (RPVDL), 160-163 (KVSV), aspartate 305, and valine 327 contribute to the UDP-N-acetyl-alpha-D-glucosamine site.

Belongs to the EPSP synthase family. MurA subfamily.

Its subcellular location is the cytoplasm. The enzyme catalyses phosphoenolpyruvate + UDP-N-acetyl-alpha-D-glucosamine = UDP-N-acetyl-3-O-(1-carboxyvinyl)-alpha-D-glucosamine + phosphate. It functions in the pathway cell wall biogenesis; peptidoglycan biosynthesis. Cell wall formation. Adds enolpyruvyl to UDP-N-acetylglucosamine. The chain is UDP-N-acetylglucosamine 1-carboxyvinyltransferase from Escherichia coli O157:H7.